Consider the following 430-residue polypeptide: 5-methylthioadenosine/S-adenosylhomocysteine deaminase (430 aa).

His-63 and His-65 together coordinate Zn(2+). Substrate is bound by residues Glu-92, Arg-144, and His-182. His-209 lines the Zn(2+) pocket. Substrate contacts are provided by Glu-212 and Asp-297. A Zn(2+)-binding site is contributed by Asp-297.

It belongs to the metallo-dependent hydrolases superfamily. MTA/SAH deaminase family. Zn(2+) is required as a cofactor.

The enzyme catalyses S-adenosyl-L-homocysteine + H2O + H(+) = S-inosyl-L-homocysteine + NH4(+). It carries out the reaction S-methyl-5'-thioadenosine + H2O + H(+) = S-methyl-5'-thioinosine + NH4(+). Its function is as follows. Catalyzes the deamination of 5-methylthioadenosine and S-adenosyl-L-homocysteine into 5-methylthioinosine and S-inosyl-L-homocysteine, respectively. Is also able to deaminate adenosine. The sequence is that of 5-methylthioadenosine/S-adenosylhomocysteine deaminase from Desulforudis audaxviator (strain MP104C).